We begin with the raw amino-acid sequence, 108 residues long: Small ribosomal subunit protein bS6 (108 aa).

Belongs to the bacterial ribosomal protein bS6 family.

Functionally, binds together with bS18 to 16S ribosomal RNA. This is Small ribosomal subunit protein bS6 from Dichelobacter nodosus (strain VCS1703A).